The sequence spans 168 residues: Probable deoxyuridine 5'-triphosphate nucleotidohydrolase (168 aa).

This sequence belongs to the dCTP deaminase family. Archaeal dUTPase subfamily.

It catalyses the reaction dUTP + H2O = dUMP + diphosphate + H(+). It functions in the pathway pyrimidine metabolism; dUMP biosynthesis; dUMP from dCTP (dUTP route): step 2/2. This enzyme is involved in nucleotide metabolism: it produces dUMP, the immediate precursor of thymidine nucleotides and it decreases the intracellular concentration of dUTP so that uracil cannot be incorporated into DNA. The polypeptide is Probable deoxyuridine 5'-triphosphate nucleotidohydrolase (Archaeoglobus fulgidus (strain ATCC 49558 / DSM 4304 / JCM 9628 / NBRC 100126 / VC-16)).